The chain runs to 108 residues: ATP synthase peripheral stalk subunit F6, mitochondrial (108 aa).

A mitochondrion-targeting transit peptide spans 1–32; sequence MILQRLFRLSSAVQSAISVSWRRNIGITAVAF. 3 positions are modified to N6-acetyllysine: K41, K46, and K79. 2 positions are modified to N6-acetyllysine; alternate: K84 and K99. Residues K84 and K99 each carry the N6-succinyllysine; alternate modification. K105 bears the N6-acetyllysine mark. S108 carries the post-translational modification Phosphoserine.

The protein belongs to the eukaryotic ATPase subunit F6 family. As to quaternary structure, component of the ATP synthase complex composed at least of ATP5F1A/subunit alpha, ATP5F1B/subunit beta, ATP5MC1/subunit c (homooctomer), MT-ATP6/subunit a, MT-ATP8/subunit 8, ATP5ME/subunit e, ATP5MF/subunit f, ATP5MG/subunit g, ATP5MK/subunit k, ATP5MJ/subunit j, ATP5F1C/subunit gamma, ATP5F1D/subunit delta, ATP5F1E/subunit epsilon, ATP5PF/subunit F6, ATP5PB/subunit b, ATP5PD/subunit d, ATP5PO/subunit OSCP. ATP synthase complex consists of a soluble F(1) head domain (subunits alpha(3) and beta(3)) - the catalytic core - and a membrane F(0) domain - the membrane proton channel (subunits c, a, 8, e, f, g, k and j). These two domains are linked by a central stalk (subunits gamma, delta, and epsilon) rotating inside the F1 region and a stationary peripheral stalk (subunits F6, b, d, and OSCP).

The protein localises to the mitochondrion. It is found in the mitochondrion inner membrane. Subunit F6, of the mitochondrial membrane ATP synthase complex (F(1)F(0) ATP synthase or Complex V) that produces ATP from ADP in the presence of a proton gradient across the membrane which is generated by electron transport complexes of the respiratory chain. ATP synthase complex consist of a soluble F(1) head domain - the catalytic core - and a membrane F(1) domain - the membrane proton channel. These two domains are linked by a central stalk rotating inside the F(1) region and a stationary peripheral stalk. During catalysis, ATP synthesis in the catalytic domain of F(1) is coupled via a rotary mechanism of the central stalk subunits to proton translocation. In vivo, can only synthesize ATP although its ATP hydrolase activity can be activated artificially in vitro. Part of the complex F(0) domain. Part of the complex F(0) domain and the peripheric stalk, which acts as a stator to hold the catalytic alpha(3)beta(3) subcomplex and subunit a/ATP6 static relative to the rotary elements. This is ATP synthase peripheral stalk subunit F6, mitochondrial from Bos taurus (Bovine).